Here is a 103-residue protein sequence, read N- to C-terminus: Sperm-associated antigen 11B (103 aa).

A signal peptide spans 1–25; sequence MRQRLLPSVTSLLLVALLFPGSSQA. N29 carries N-linked (GlcNAc...) asparagine glycosylation.

It belongs to the SPAG11 family. Specifically expressed in caput and proximal corpus of epididymis (at protein level). Present in the epididymal epithelium and on the sperm surface, with a subacrosomal equatorial distribution on the sperm head (at protein level).

Its subcellular location is the secreted. In terms of biological role, has antimicrobial activity against E.coli. Plays a role in the defense response in the male reproductive tract, contributing to sperm maturation, storage and protection. The sequence is that of Sperm-associated antigen 11B from Homo sapiens (Human).